Reading from the N-terminus, the 235-residue chain is Small ribosomal subunit protein eS4 (235 aa).

Positions 38–99 (VTLLSIIRDY…GESYRVVYND (62 aa)) constitute an S4 RNA-binding domain.

This sequence belongs to the eukaryotic ribosomal protein eS4 family.

The polypeptide is Small ribosomal subunit protein eS4 (rps4e) (Thermoplasma acidophilum (strain ATCC 25905 / DSM 1728 / JCM 9062 / NBRC 15155 / AMRC-C165)).